Consider the following 486-residue polypeptide: Ribosomal protein uS12 methylthiotransferase RimO (486 aa).

Residues 9–125 enclose the MTTase N-terminal domain; it reads RSVALVTLGC…LSSHLEAILH (117 aa). 6 residues coordinate [4Fe-4S] cluster: C18, C54, C88, C191, C195, and C198. Positions 177–408 constitute a Radical SAM core domain; sequence LGSGPWAPVK…RLVEELVTQR (232 aa). Residues 410-482 form the TRAM domain; it reads EERLGEVVEV…GADLLAEPLV (73 aa).

The protein belongs to the methylthiotransferase family. RimO subfamily. Requires [4Fe-4S] cluster as cofactor.

The protein resides in the cytoplasm. The catalysed reaction is L-aspartate(89)-[ribosomal protein uS12]-hydrogen + (sulfur carrier)-SH + AH2 + 2 S-adenosyl-L-methionine = 3-methylsulfanyl-L-aspartate(89)-[ribosomal protein uS12]-hydrogen + (sulfur carrier)-H + 5'-deoxyadenosine + L-methionine + A + S-adenosyl-L-homocysteine + 2 H(+). Its function is as follows. Catalyzes the methylthiolation of an aspartic acid residue of ribosomal protein uS12. The sequence is that of Ribosomal protein uS12 methylthiotransferase RimO from Kineococcus radiotolerans (strain ATCC BAA-149 / DSM 14245 / SRS30216).